The following is a 394-amino-acid chain: Cell division protein FtsZ (394 aa).

GTP contacts are provided by residues 21–25 (GGGGN), 108–110 (GTG), glutamate 139, arginine 143, and aspartate 187.

Belongs to the FtsZ family. Homodimer. Polymerizes to form a dynamic ring structure in a strictly GTP-dependent manner. Interacts directly with several other division proteins.

It localises to the cytoplasm. Essential cell division protein that forms a contractile ring structure (Z ring) at the future cell division site. The regulation of the ring assembly controls the timing and the location of cell division. One of the functions of the FtsZ ring is to recruit other cell division proteins to the septum to produce a new cell wall between the dividing cells. Binds GTP and shows GTPase activity. In Azotobacter vinelandii, this protein is Cell division protein FtsZ.